The primary structure comprises 427 residues: MTNSLLTIGDMVQGVELPDADRQFWWDSLAPILSRMLQCSKYSVESQANILSFFKDFIVPSYGPRPSIGGEFFWKSYVTYNHTPGQVSFNFHKDKCTVRLSNVPTAPLAGTASDPFNQKGVVQTIKQIQKALPDMDITLFDYFSEAFLVADEDTVGLDARKPVPQYNQLVVASMLGYDFEPVPRVKVYFNPRWKALQMNTENHDLIWTAINNLGSPIKSYKRTLDLLQECGTPRQLGGWIFQPEFISFDLAENMSNAARLKLYGFTTKTCWSHIESIYTLDGRLNDAETQRGLAVLKRLWHLALSIPEDHDENQDLPPCPHLTAGVIYNYELRENSAKPEAKIYIPVRFYGSGDGKVIEGLVDFFKSEGWDELARSYQRDFVSVFSTPDGKMAGEHHDISFSYKNEHPYVTAYYRPELIRPMERHIV.

Position 77–78 (77–78 (YV)) interacts with L-tryptophan. Substrate contacts are provided by arginine 99, lysine 186, tyrosine 188, arginine 259, lysine 261, tyrosine 263, tyrosine 344, tyrosine 409, and tyrosine 413.

Belongs to the tryptophan dimethylallyltransferase family.

The protein operates within secondary metabolite biosynthesis. Its function is as follows. Indole diterpene prenyltransferase; part of the gene cluster that mediates the biosynthesis of the indole diterpenes penitrems. The geranylgeranyl diphosphate (GGPP) synthase ptmG catalyzes the first step in penitrem biosynthesis via conversion of farnesyl pyrophosphate and isopentyl pyrophosphate into geranylgeranyl pyrophosphate (GGPP). Condensation of indole-3-glycerol phosphate with GGPP by the prenyl transferase ptmC then forms 3-geranylgeranylindole (3-GGI). Epoxidation by the FAD-dependent monooxygenase ptmM leads to a epoxidized-GGI that is substrate of the terpene cyclase ptmB for cyclization to yield paspaline. Paspaline is subsequently converted to 13-desoxypaxilline by the cytochrome P450 monooxygenase ptmP, the latter being then converted to paxilline by the cytochrome P450 monooxygenase ptmQ. Paxilline is converted to beta-paxitriol via C-10 ketoreduction by the short-chain dehydrogenase ptmH which can be monoprenylated at the C-20 by the indole diterpene prenyltransferase ptmD. A two-step elimination (acetylation and elimination) process performed by the O-acetyltransferase ptmV and ptmI leads to the production of the prenylated form of penijanthine. The FAD-linked oxidoreductase ptmO then converts the prenylated form of penijanthine into PC-M5 which is in turn transformed into PC-M4 by the aromatic dimethylallyltransferase ptmE. Five sequential oxidative transformations performed by the cytochrome P450 monooxygenases ptmK, ptmU, ptmL, ptmN and ptmJ yield the various penitrem compounds. PtmK, ptmU and ptmM are involved in the formation of the key bicyclic ring of penitrem C via the formation of the intermediates secopenitrem D and penitrem D. PtmL catalyzes the epoxidation of penitrem D and C to yield penitrem B and F, respectively. PtmJ catalyzes the last benzylic hydroxylation to convert penitrem B to prenitrem E and penitrem F to penitrem A. This chain is Indole diterpene prenyltransferase ptmD, found in Penicillium ochrochloron.